Reading from the N-terminus, the 453-residue chain is uncharacterized protein (453 aa).

Residues cysteine 74, cysteine 80, cysteine 83, and cysteine 162 each coordinate [4Fe-4S] cluster. Positions 286, 315, 336, and 384 each coordinate S-adenosyl-L-methionine. Cysteine 411 functions as the Nucleophile in the catalytic mechanism.

Belongs to the class I-like SAM-binding methyltransferase superfamily. RNA M5U methyltransferase family.

This is an uncharacterized protein from Staphylococcus aureus (strain Mu50 / ATCC 700699).